We begin with the raw amino-acid sequence, 220 residues long: Histone deacetylase complex subunit SAP30 (220 aa).

The interaction with NCOR1 stretch occupies residues 1–129 (MNGFTPDEMS…QSVRNRRKRK (129 aa)). Threonine 5 is modified (phosphothreonine). The segment at 67 to 115 (CCLREDGERCGRAAGNASFSKRIQKSISQKKVKIELDKSARHLYICDYH) adopts an Atypical zinc-finger fold. Lysine 87 is covalently cross-linked (Glycyl lysine isopeptide (Lys-Gly) (interchain with G-Cter in SUMO2)). The interval 123 to 143 (RNRRKRKGSDDDGGDSPVQDI) is disordered. The segment at 130 to 220 (GSDDDGGDSP…SDLKVDSGVH (91 aa)) is interaction with SIN3A. Phosphoserine is present on residues serine 131 and serine 138. The residue at position 145 (threonine 145) is a Phosphothreonine. Residues lysine 194, lysine 205, and lysine 214 each participate in a glycyl lysine isopeptide (Lys-Gly) (interchain with G-Cter in SUMO2) cross-link.

It belongs to the SAP30 family. As to quaternary structure, component of the histone deacetylase complex that includes at least SIN3A, HDAC1 and HDAC2. Found in a complex composed of at least SINHCAF, SIN3A, HDAC1, SAP30, RBBP4, OGT and TET1. Interacts with HDAC1. Interacts with SIN3A, SIN3B, HDAC2, RBBP4 and NCOR1. Interacts with SAMSN1. Interacts with HCFC1. Interacts with SAP30BP. As to expression, expressed in all tissues tested with highest levels in pancreas, ovary, PBL, spleen and thymus; lowest levels in brain, placenta, lung and kidney.

Its subcellular location is the nucleus. In terms of biological role, involved in the functional recruitment of the Sin3-histone deacetylase complex (HDAC) to a specific subset of N-CoR corepressor complexes. Capable of transcription repression by N-CoR. Active in deacetylating core histone octamers (when in a complex) but inactive in deacetylating nucleosomal histones. Its function is as follows. (Microbial infection) Involved in transcriptional repression of HHV-1 genes TK and gC. This Homo sapiens (Human) protein is Histone deacetylase complex subunit SAP30.